The sequence spans 467 residues: Megakaryocyte-associated tyrosine-protein kinase (467 aa).

A disordered region spans residues M1–R20. The SH3 domain occupies A7 to A69. The SH2 domain maps to W81–K170. One can recognise a Protein kinase domain in the interval L194–R443. ATP contacts are provided by residues I200–V208 and K221. The active-site Proton acceptor is D311. The interval V445 to P467 is disordered.

This sequence belongs to the protein kinase superfamily. Tyr protein kinase family. CSK subfamily. Interacts with KIT. In terms of tissue distribution, enriched in lymphoid tissues.

It is found in the cytoplasm. It localises to the membrane. The catalysed reaction is L-tyrosyl-[protein] + ATP = O-phospho-L-tyrosyl-[protein] + ADP + H(+). In terms of biological role, could play a significant role in the signal transduction of hematopoietic cells. May regulate tyrosine kinase activity of SRC-family members in brain. The chain is Megakaryocyte-associated tyrosine-protein kinase (Matk) from Rattus norvegicus (Rat).